Here is a 280-residue protein sequence, read N- to C-terminus: Protease HtpX (280 aa).

The next 2 helical transmembrane spans lie at 7–26 (TFILLASLTALLVVIGGLLG) and 30–49 (GMLIALVFAGVMNFSAYWYS). H129 contacts Zn(2+). The active site involves E130. H133 lines the Zn(2+) pocket. A run of 2 helical transmembrane segments spans residues 146–166 (ATIAGAISGIANMFMWLSMFG) and 178–198 (VVGMIMMIVAPLAAGLIQMAI). E203 is a binding site for Zn(2+).

This sequence belongs to the peptidase M48B family. Zn(2+) is required as a cofactor.

It localises to the cell inner membrane. In Legionella pneumophila subsp. pneumophila (strain Philadelphia 1 / ATCC 33152 / DSM 7513), this protein is Protease HtpX.